Consider the following 378-residue polypeptide: RIB43A-like with coiled-coils protein 1 (378 aa).

2 coiled-coil regions span residues 153–250 and 279–334; these read RMQQ…VTSD and EQRA…CAEF.

Belongs to the RIB43A family. As to quaternary structure, microtubule inner protein component of sperm flagellar doublet microtubules.

Its subcellular location is the cytoplasm. The protein localises to the cytoskeleton. It is found in the flagellum axoneme. The sequence is that of RIB43A-like with coiled-coils protein 1 (Ribc1) from Rattus norvegicus (Rat).